The primary structure comprises 429 residues: 3-phosphoshikimate 1-carboxyvinyltransferase (429 aa).

3-phosphoshikimate-binding residues include Lys21, Ser22, and Arg26. Lys21 contacts phosphoenolpyruvate. Phosphoenolpyruvate-binding residues include Gly94 and Arg122. Residues Ser167, Gln169, Asp315, and Lys342 each contribute to the 3-phosphoshikimate site. A phosphoenolpyruvate-binding site is contributed by Gln169. Asp315 functions as the Proton acceptor in the catalytic mechanism. Residues Arg346 and Arg388 each contribute to the phosphoenolpyruvate site.

Belongs to the EPSP synthase family. Monomer.

It is found in the cytoplasm. It carries out the reaction 3-phosphoshikimate + phosphoenolpyruvate = 5-O-(1-carboxyvinyl)-3-phosphoshikimate + phosphate. It functions in the pathway metabolic intermediate biosynthesis; chorismate biosynthesis; chorismate from D-erythrose 4-phosphate and phosphoenolpyruvate: step 6/7. Its function is as follows. Catalyzes the transfer of the enolpyruvyl moiety of phosphoenolpyruvate (PEP) to the 5-hydroxyl of shikimate-3-phosphate (S3P) to produce enolpyruvyl shikimate-3-phosphate and inorganic phosphate. This Desulforudis audaxviator (strain MP104C) protein is 3-phosphoshikimate 1-carboxyvinyltransferase.